Reading from the N-terminus, the 222-residue chain is PKHD-type hydroxylase Syncc9605_1577 (222 aa).

One can recognise a Fe2OG dioxygenase domain in the interval 80–175 (KVHSLLVSRS…RYVCVGWIES (96 aa)). Positions 98, 100, and 156 each coordinate Fe cation. 2-oxoglutarate is bound at residue Arg166.

Fe(2+) serves as cofactor. The cofactor is L-ascorbate.

This is PKHD-type hydroxylase Syncc9605_1577 from Synechococcus sp. (strain CC9605).